Consider the following 212-residue polypeptide: Guanylate kinase (212 aa).

In terms of domain architecture, Guanylate kinase-like spans 7-187 (GLLIVLSGPS…AADRIIAIIR (181 aa)). Residue 14-21 (GPSGVGKA) participates in ATP binding.

It belongs to the guanylate kinase family.

The protein localises to the cytoplasm. The catalysed reaction is GMP + ATP = GDP + ADP. Essential for recycling GMP and indirectly, cGMP. The polypeptide is Guanylate kinase (Onion yellows phytoplasma (strain OY-M)).